The chain runs to 289 residues: Probable early E4 33 kDa protein (289 aa).

It belongs to the adenoviridae E4 30 to 34 kDa protein family. In terms of assembly, interacts with E1B-55k.

Its subcellular location is the host nucleus. The protein localises to the host cytoplasm. Functionally, plays a major role to prevent cellular inhibition of viral genome replication by nuclear bodies. Assembles an SCF-like E3 ubiquitin ligase complex based on the cellular proteins ELOB, ELOC, CUL5 and RBX1, in cooperation with viral E1B-55K. This viral RING-type ligase ubiquitinates cellular substrates prior to proteasomal degradation: p53/TP53, LIG4, MRE11-RAD50-NBS1 (MRN) complex, ITGA3, DAXX and BLM. This chain is Probable early E4 33 kDa protein, found in Mus musculus (Mouse).